The chain runs to 245 residues: Demethylmenaquinone methyltransferase (245 aa).

S-adenosyl-L-methionine contacts are provided by residues Thr-62, Asp-80, 105–106, and Ser-122; that span reads DA.

The protein belongs to the class I-like SAM-binding methyltransferase superfamily. MenG/UbiE family.

The enzyme catalyses a 2-demethylmenaquinol + S-adenosyl-L-methionine = a menaquinol + S-adenosyl-L-homocysteine + H(+). It functions in the pathway quinol/quinone metabolism; menaquinone biosynthesis; menaquinol from 1,4-dihydroxy-2-naphthoate: step 2/2. In terms of biological role, methyltransferase required for the conversion of demethylmenaquinol (DMKH2) to menaquinol (MKH2). The sequence is that of Demethylmenaquinone methyltransferase from Clavibacter sepedonicus (Clavibacter michiganensis subsp. sepedonicus).